Here is a 229-residue protein sequence, read N- to C-terminus: uncharacterized protein (229 aa).

This is an uncharacterized protein from Borreliella burgdorferi (strain ATCC 35210 / DSM 4680 / CIP 102532 / B31) (Borrelia burgdorferi).